A 434-amino-acid polypeptide reads, in one-letter code: MAVQESAAQLSMTLKVQEYPTLKVPYETLNKRFRAAQKNIDRETSHVTMVVAELEKTLSGCPAVDSVVSLLDGVVEKLSVLKRKAVESIQAEDESAKLCKRRIEHLKEHSSDQPAAASVWKRKRMDRMMVEHLLRCGYYNTAVKLARQSGIEDLVNIEMFLTAKEVEESLERRETATCLAWCHDNKSRLRKMKGRQSEHDAKTGRKSRVASGSPKESEDLGMETIKGKPELSCLEFSLRIQEFIELIRQNKRLDAVRHARKHFSQAEGSQLDEVRQVMGMLAFPPDTHISPYKDLLDPARWRMLIQQFRYDNYRLHQLGNSSVFTLTLQAGLSAIKTPQCYKEDGSSRSPDCPVCSRSLNKLAQPLPMAHCANSRLVCKISGDVMNENNPPMMLPNGYVYGYNSLLSIRQDDKVVCPRTKEVFHFSQAEKVYIM.

Residues 1 to 124 form an extracellular and involved in cell to cell contact region; sequence MAVQESAAQL…AAASVWKRKR (124 aa). The residue at position 28 (Thr28) is a Phosphothreonine. Residues 121–153 enclose the LisH domain; it reads KRKRMDRMMVEHLLRCGYYNTAVKLARQSGIED. The CTLH domain maps to 159-254; that stretch reads MFLTAKEVEE…ELIRQNKRLD (96 aa). Positions 190–222 are disordered; sequence RKMKGRQSEHDAKTGRKSRVASGSPKESEDLGM. Residues 352–419 form an RING-Gid-type zinc finger; it reads CPVCSRSLNK…QDDKVVCPRT (68 aa).

As to quaternary structure, identified in the CTLH complex that contains GID4, RANBP9 and/or RANBP10, MKLN1, MAEA, RMND5A (or alternatively its paralog RMND5B), GID8, ARMC8, WDR26 and YPEL5. Within this complex, MAEA, RMND5A (or alternatively its paralog RMND5B), GID8, WDR26, and RANBP9 and/or RANBP10 form the catalytic core, while GID4, MKLN1, ARMC8 and YPEL5 have ancillary roles. Interacts with F-actin. Autoubiquitinated as component of the CTLH E3 ubiquitin-protein ligase complex (in vitro).

It localises to the cytoplasm. Its subcellular location is the nucleus. The protein localises to the nucleoplasm. It is found in the nucleus matrix. The protein resides in the cell membrane. It localises to the cytoskeleton. The enzyme catalyses S-ubiquitinyl-[E2 ubiquitin-conjugating enzyme]-L-cysteine + [acceptor protein]-L-lysine = [E2 ubiquitin-conjugating enzyme]-L-cysteine + N(6)-ubiquitinyl-[acceptor protein]-L-lysine.. In terms of biological role, core component of the CTLH E3 ubiquitin-protein ligase complex that selectively accepts ubiquitin from UBE2H and mediates ubiquitination and subsequent proteasomal degradation of the transcription factor HBP1. MAEA and RMND5A are both required for catalytic activity of the CTLH E3 ubiquitin-protein ligase complex. MAEA is required for normal cell proliferation. The CTLH E3 ubiquitin-protein ligase complex is not required for the degradation of enzymes involved in gluconeogenesis, such as FBP1. Plays a role in erythroblast enucleation during erythrocyte maturation and in the development of mature macrophages. Mediates the attachment of erythroid cell to mature macrophages; this MAEA-mediated contact inhibits erythroid cell apoptosis. Participates in erythroblastic island formation, which is the functional unit of definitive erythropoiesis. Associates with F-actin to regulate actin distribution in erythroblasts and macrophages. May contribute to nuclear architecture and cells division events. This is E3 ubiquitin-protein transferase MAEA (MAEA) from Bos taurus (Bovine).